A 430-amino-acid polypeptide reads, in one-letter code: WD repeat-containing protein jip5 (430 aa).

WD repeat units follow at residues proline 9 to glutamate 48, arginine 72 to lysine 111, threonine 117 to serine 158, aspartate 215 to glutamate 262, alanine 272 to glutamate 318, and aspartate 323 to glutamate 360. A compositionally biased stretch (acidic residues) spans glutamate 356–aspartate 374. Positions glutamate 356–glutamate 430 are disordered. Positions histidine 382–serine 397 are enriched in basic and acidic residues. Basic residues predominate over residues arginine 405–lysine 416.

The protein belongs to the WD repeat WDR55 family.

Its subcellular location is the nucleus. It localises to the nucleolus. The polypeptide is WD repeat-containing protein jip5 (jip5) (Botryotinia fuckeliana (strain B05.10) (Noble rot fungus)).